Reading from the N-terminus, the 380-residue chain is Cytochrome b (380 aa).

The next 4 membrane-spanning stretches (helical) occupy residues 33–53, 77–98, 113–133, and 178–198; these read FGSLLGLCLITQIATGLFLAM, WLIRNLHANGASFFFICIYLHI, WNVGVILLLLVMMTAFVGYVL, and FFAFHFLLPFIIAAATVIHLL. Positions 83 and 97 each coordinate heme b. The heme b site is built by histidine 182 and histidine 196. Histidine 201 is a binding site for a ubiquinone. Helical transmembrane passes span 226–246, 288–308, 320–340, and 347–367; these read YKDLLGFAALLIALTSLALFS, LGGVLALLFSILVLMLVPILH, ITQFLFWTLVADVIILTWIGG, and FIIIGQIASFLYFFLFLVLTP.

It belongs to the cytochrome b family. The cytochrome bc1 complex contains 3 respiratory subunits (MT-CYB, CYC1 and UQCRFS1), 2 core proteins (UQCRC1 and UQCRC2) and probably 6 low-molecular weight proteins. The cofactor is heme b.

It is found in the mitochondrion inner membrane. Functionally, component of the ubiquinol-cytochrome c reductase complex (complex III or cytochrome b-c1 complex) that is part of the mitochondrial respiratory chain. The b-c1 complex mediates electron transfer from ubiquinol to cytochrome c. Contributes to the generation of a proton gradient across the mitochondrial membrane that is then used for ATP synthesis. The protein is Cytochrome b (mt-cyb) of Dactyloptena peterseni (Starry flying gurnard).